The chain runs to 424 residues: Synaptotagmin-1 (424 aa).

The Vesicular segment spans residues 1-60 (MVSESHHEALAAPPATTVAAALPSNVTEPAAPGGGGGKEDAFSNLKKKFMNELNKIPLPP). Asparagine 25 carries an N-linked (GlcNAc...) asparagine glycan. Residues 61–82 (WALIAIAIVAVLLILTCCFCLC) form a helical membrane-spanning segment. S-palmitoyl cysteine attachment occurs at residues cysteine 77, cysteine 78, cysteine 80, cysteine 82, and cysteine 85. The Cytoplasmic segment spans residues 83–424 (KKCLFKKKNK…EVDAMLAVKK (342 aa)). A disordered region spans residues 117-142 (KDQALKDDDAETGLTDGEEKEEPKEV). Residues 124–136 (DDAETGLTDGEEK) show a composition bias toward acidic residues. The interval 138-384 (EPKEVEKLGK…AIGKVFVGYN (247 aa)) is phospholipid binding. C2 domains are found at residues 144 to 263 (KLGK…EEWR) and 275 to 408 (KLGD…AQWH). Leucine 174, aspartate 175, aspartate 181, aspartate 233, phenylalanine 234, aspartate 235, serine 238, lysine 239, aspartate 241, aspartate 306, aspartate 312, aspartate 366, aspartate 368, and aspartate 374 together coordinate Ca(2+).

It belongs to the synaptotagmin family. As to quaternary structure, homotetramer. Ca(2+) is required as a cofactor.

It localises to the cytoplasmic vesicle. The protein localises to the secretory vesicle membrane. It is found in the secretory vesicle. The protein resides in the synaptic vesicle membrane. Its subcellular location is the chromaffin granule membrane. It localises to the cytoplasm. In terms of biological role, calcium sensor that participates in triggering neurotransmitter release at the synapse. May have a regulatory role in the membrane interactions during trafficking of synaptic vesicles at the active zone of the synapse. It binds acidic phospholipids with a specificity that requires the presence of both an acidic head group and a diacyl backbone. May play a role in dendrite formation by melanocytes. In Gallus gallus (Chicken), this protein is Synaptotagmin-1 (SYT1).